We begin with the raw amino-acid sequence, 230 residues long: uncharacterized protein (230 aa).

The protein to E.coli HemX N-terminal region.

This is an uncharacterized protein from Haemophilus influenzae (strain ATCC 51907 / DSM 11121 / KW20 / Rd).